The sequence spans 645 residues: MNASSEGESFAGSVQIPGGTTVLVELTPDIHICGICKQQFNNLDAFVAHKQSGCQLTGTSAAAPSTVQFVSEETVPATQTQTTTRTITSETQTITVSAPEFVFEHGYQTYLPTESNENQTATVISLPAKSRTKKPTTPPAQKRLNCCYPGCQFKTAYGMKDMERHLKIHTGDKPHKCEVCGKCFSRKDKLKTHMRCHTGVKPYKCKTCDYAAADSSSLNKHLRIHSDERPFKCQICPYASRNSSQLTVHLRSHTASELDDDVPKANCLSTESTDTPKAPVITLPSEAREQMATLGERTFNCCYPGCHFKTVHGMKDLDRHLRIHTGDKPHKCEFCDKCFSRKDNLTMHMRCHTSVKPHKCHLCDYAAVDSSSLKKHLRIHSDERPYKCQLCPYASRNSSQLTVHLRSHTGDTPFQCWLCSAKFKISSDLKRHMIVHSGEKPFKCEFCDVRCTMKANLKSHIRIKHTFKCLHCAFQGRDRADLLEHSRLHQADHPEKCPECSYSCSSAAALRVHSRVHCKDRPFKCDFCSFDTKRPSSLAKHVDKVHRDEAKTENRAPLGKEGLREGSSQHVAKIVTQRAFRCETCGASFVRDDSLRCHKKQHSDQSENKNSDLVTFPPESGASGQLSTLVSVGQLEAPLEPSQDL.

3 consecutive C2H2-type zinc fingers follow at residues 175 to 197, 203 to 225, and 231 to 253; these read HKCE…MRCH, YKCK…LRIH, and FKCQ…LRSH. Residue glutamate 286 forms a Glycyl lysine isopeptide (Lys-Gly) (interchain with G-Cter in SUMO2) linkage. The segment at 299–324 adopts a C2H2-type 4; atypical zinc-finger fold; the sequence is FNCCYPGCHFKTVHGMKDLDRHLRIH. 9 C2H2-type zinc fingers span residues 330 to 352, 358 to 380, 386 to 408, 414 to 436, 442 to 465, 467 to 489, 495 to 517, 523 to 546, and 580 to 602; these read HKCE…MRCH, HKCH…LRIH, YKCQ…LRSH, FQCW…MIVH, FKCE…RIKH, FKCL…SRLH, EKCP…SRVH, FKCD…DKVH, and FRCE…KKQH. Asparagine 397 participates in a covalent cross-link: Glycyl lysine isopeptide (Lys-Gly) (interchain with G-Cter in SUMO2). 2 stretches are compositionally biased toward basic and acidic residues: residues 543–554 and 600–610; these read DKVHRDEAKTEN and KQHSDQSENKN. Disordered regions lie at residues 543 to 567 and 600 to 645; these read DKVH…REGS and KQHS…SQDL. Residue valine 545 is modified to Phosphoserine. The segment covering 622–631 has biased composition (polar residues); that stretch reads ASGQLSTLVS.

This sequence belongs to the krueppel C2H2-type zinc-finger protein family. Interacts with ZNF70; this interaction promote the transactivation of the HES1 gene. Interacts with NOTCH1.

The protein localises to the nucleus. Functionally, may be involved in the regulation of mesenchymal cell differentiation through transactivation of NOTCH1 target genes. The polypeptide is Zinc finger protein 64 (Homo sapiens (Human)).